The primary structure comprises 114 residues: Class I hydrophobin SC16 (114 aa).

A signal peptide spans 1–17 (MRFFATLVLALPALAMA). 4 cysteine pairs are disulfide-bonded: cysteine 33-cysteine 93, cysteine 40-cysteine 87, cysteine 41-cysteine 74, and cysteine 94-cysteine 107. An N-linked (GlcNAc...) asparagine glycan is attached at asparagine 42.

Belongs to the fungal hydrophobin family. In terms of assembly, self-assembles to form functional amyloid fibrils called rodlets. Self-assembly into fibrillar rodlets occurs spontaneously at hydrophobic:hydrophilic interfaces and the rodlets further associate laterally to form amphipathic monolayers.

Its subcellular location is the secreted. The protein localises to the cell wall. Its function is as follows. Aerial growth, conidiation, and dispersal of filamentous fungi in the environment rely upon a capability of their secreting small amphipathic proteins called hydrophobins (HPBs) with low sequence identity. Class I can self-assemble into an outermost layer of rodlet bundles on aerial cell surfaces, conferring cellular hydrophobicity that supports fungal growth, development and dispersal; whereas Class II form highly ordered films at water-air interfaces through intermolecular interactions but contribute nothing to the rodlet structure. The sequence is that of Class I hydrophobin SC16 from Schizophyllum commune (strain H4-8 / FGSC 9210) (Split gill fungus).